The primary structure comprises 269 residues: GTP cyclohydrolase FolE2 1 (269 aa).

It belongs to the GTP cyclohydrolase IV family.

The enzyme catalyses GTP + H2O = 7,8-dihydroneopterin 3'-triphosphate + formate + H(+). The protein operates within cofactor biosynthesis; 7,8-dihydroneopterin triphosphate biosynthesis; 7,8-dihydroneopterin triphosphate from GTP: step 1/1. In terms of biological role, converts GTP to 7,8-dihydroneopterin triphosphate. The sequence is that of GTP cyclohydrolase FolE2 1 from Burkholderia cenocepacia (strain HI2424).